Consider the following 518-residue polypeptide: Sensor protein kinase HptS (518 aa).

A run of 2 helical transmembrane segments spans residues Ile-20–Trp-40 and Gly-222–Ile-242. In terms of domain architecture, Histidine kinase spans Glu-297–Arg-513. His-325 is modified (phosphohistidine; by autocatalysis).

In terms of processing, autophosphorylated.

It localises to the cell membrane. It carries out the reaction ATP + protein L-histidine = ADP + protein N-phospho-L-histidine.. Functionally, member of the two-component regulatory system HptS/HptR that regulates genes involved in hexose phosphate transport system in response to changes in extracellular phosphate sources. May act as a sensor protein kinase which is autophosphorylated at a histidine residue and transfers its phosphate group to the conserved aspartic acid residue in the regulatory domain of HptS. In turn, HptS antagonizes CcpA-dependent transcription of a subset of CcpA-regulated genes involved in antibiotic susceptibility. In Staphylococcus aureus (strain bovine RF122 / ET3-1), this protein is Sensor protein kinase HptS (hptS).